Reading from the N-terminus, the 235-residue chain is Keratin-associated protein 4-16 (235 aa).

The 16 X 5 AA repeats of C-C-[GIKRQVHEML]-[SPTRV]-[STVQRCP] stretch occupies residues 1–132 (MCSSKMPCSP…CCCPCCCLRP (132 aa)). Tandem repeats lie at residues 23–27 (CCHPS), 28–32 (CCQTT), 33–37 (CCRTT), 48–52 (CCRPQ), 53–57 (CCHSV), 58–62 (CCQPT), 63–67 (CCRPS), 68–72 (CCQTT), 78–82 (CCHPS), 83–87 (CCVSS), 88–92 (CCRPQ), 93–97 (CCHSV), 103–107 (CCHPS), 108–112 (CCISS), 118–122 (CCESS), and 128–132 (CCLRP). Over residues 203 to 224 (SPSPSLPSLSPPLPSPPLPSPH) the composition is skewed to pro residues. Residues 203–235 (SPSPSLPSLSPPLPSPPLPSPHFPSVNPKSMLQ) are disordered.

This sequence belongs to the KRTAP type 4 family. As to quaternary structure, interacts with hair keratins.

Functionally, in the hair cortex, hair keratin intermediate filaments are embedded in an interfilamentous matrix, consisting of hair keratin-associated proteins (KRTAP), which are essential for the formation of a rigid and resistant hair shaft through their extensive disulfide bond cross-linking with abundant cysteine residues of hair keratins. The matrix proteins include the high-sulfur and high-glycine-tyrosine keratins. In Homo sapiens (Human), this protein is Keratin-associated protein 4-16.